The primary structure comprises 744 residues: Tripartite motif-containing protein 3 (744 aa).

Alanine 2 bears the N-acetylalanine mark. The tract at residues 2-290 is interaction with KIF21B; that stretch reads AKREDSPGPE…LAAQAFPERP (289 aa). Serine 7 carries the phosphoserine modification. The RING-type zinc-finger motif lies at 22–63; that stretch reads CSICLDRYRCPKVLPCLHTFCERCLQNYIPPQSLTLSCPVCR. The segment at 110 to 151 adopts a B box-type zinc-finger fold; that stretch reads GRPLSCPNHEGKTMEFYCEACETAMCGECRAGEHREHGTVLL. Cysteine 115, histidine 118, cysteine 138, and histidine 143 together coordinate Zn(2+). The stretch at 153–224 forms a coiled coil; it reads DVVEQHKAAL…RKQALVSDLE (72 aa). Residues 317–418 form a Filamin repeat; the sequence is TTSAAAHETV…VRGSPFRVRA (102 aa). Residues 420 to 462 are disordered; it reads RPGDLPPSPDDVKRRVKSPGGPGSHVRQKAVRRPSSMYSTGGK. Serine 427 carries the post-translational modification Phosphoserine. NHL repeat units lie at residues 473-516, 520-563, 564-605, 609-652, 656-699, and 700-743; these read VFRV…FSNE, KFRF…FSPE, GKFK…FQPN, VGRF…YSAD, LFKF…FDSS, and GSFL…YRYL.

Belongs to the TRIM/RBCC family. Forms homooligomers. Interacts with TRIM2; this interaction reduces TRIM2 activity. Associates with myosin-Vb (MYO5B) and alpha-actinin-4 (ACTN4). Component of the CART complex, at least composed of ACTN4, HGS/HRS, MYO5B and TRIM3. Interacts with ZFYVE28/LST2. Interacts with KIF21B. As to expression, highly expressed in the brain, moderate levels in the lung, very low levels in the liver, kidney and heart. In the brain, expression was highest in the cerebellum. Expression in the brain is found at low levels at embryonic day 15 and then increases during the first two postnatal weeks before decreasing through adulthood.

The protein resides in the cytoplasm. It is found in the early endosome. Its subcellular location is the golgi apparatus. It localises to the trans-Golgi network. The protein localises to the cell projection. The protein resides in the dendrite. The catalysed reaction is S-ubiquitinyl-[E2 ubiquitin-conjugating enzyme]-L-cysteine + [acceptor protein]-L-lysine = [E2 ubiquitin-conjugating enzyme]-L-cysteine + N(6)-ubiquitinyl-[acceptor protein]-L-lysine.. E3 ubiquitin ligase that plays essential roles in neuronal functions such as regulation of neuronal plasticity, learning, and memory. In addition to its neuronal functions, participates in other biological processes such as innate immunity or cell cycle regulation. Component of the cytoskeleton-associated recycling or transport complex in neurons, polyubiquitinates gamma-actin, thus regulating neuronal plasticity, learning, and memory. Ubiquitinates postsynaptic scaffold GKAP, a neuronal substrate involved in synaptic remodeling and thereby modulates dendritic spine morphology. Positively regulates motility of microtubule-dependent motor protein KIF21B. Induces growth arrest via its RING-dependent E3 ligase activity and ubiquinates CDKN1A. Positively regulates TLR3-mediated signaling by mediating 'Lys-63'-linked polyubiquitination of TLR3. In turn, promotes the recognition and sorting of polyubiquitinated TLR3 by the ESCRT complexes. The chain is Tripartite motif-containing protein 3 (Trim3) from Rattus norvegicus (Rat).